Reading from the N-terminus, the 118-residue chain is Altered inheritance of mitochondria protein 26, mitochondrial (118 aa).

3 helical membrane-spanning segments follow: residues 7 to 27, 41 to 61, and 98 to 118; these read EHLL…AYFF, LAVT…SIPA, and FLFC…GLSI.

Its subcellular location is the mitochondrion membrane. Involved in selective mitochondria autophagy (mitophagy). This is Altered inheritance of mitochondria protein 26, mitochondrial (AIM26) from Saccharomyces cerevisiae (strain ATCC 204508 / S288c) (Baker's yeast).